Here is a 187-residue protein sequence, read N- to C-terminus: Elongation factor P (187 aa).

This sequence belongs to the elongation factor P family.

Its subcellular location is the cytoplasm. The protein operates within protein biosynthesis; polypeptide chain elongation. Involved in peptide bond synthesis. Stimulates efficient translation and peptide-bond synthesis on native or reconstituted 70S ribosomes in vitro. Probably functions indirectly by altering the affinity of the ribosome for aminoacyl-tRNA, thus increasing their reactivity as acceptors for peptidyl transferase. This Ruegeria sp. (strain TM1040) (Silicibacter sp.) protein is Elongation factor P.